The primary structure comprises 93 residues: Small ribosomal subunit protein uS19 (93 aa).

Disordered regions lie at residues 1-25 (MPRSLKKGPFVDGHLQKKVDDQNTK) and 74-93 (FAPTRTYRGHDKDDRKARRR). Composition is skewed to basic and acidic residues over residues 14-23 (HLQKKVDDQN) and 81-93 (RGHDKDDRKARRR).

The protein belongs to the universal ribosomal protein uS19 family.

In terms of biological role, protein S19 forms a complex with S13 that binds strongly to the 16S ribosomal RNA. The polypeptide is Small ribosomal subunit protein uS19 (Beutenbergia cavernae (strain ATCC BAA-8 / DSM 12333 / CCUG 43141 / JCM 11478 / NBRC 16432 / NCIMB 13614 / HKI 0122)).